The chain runs to 233 residues: MDARQMKIEAARAALAYVESGMRLGVGTGSTAEEFVRLLAEKVAAGLVIEGVPTSERTARLCVDLGVPLKSLDELPELDLTIDGADEVDGALRLIKGGGGALLREKIVAASSQRMIVIADESKVVQTLGAFALPIEVNPFGLVSTRIQIEKTAARLGLSGALNLRQSEDGNFMTDGGHFIIDASFGRIPDAEALSIALNSIPGVVEHGLFINMATLAIIAGPSGARTLQANNT.

Substrate contacts are provided by residues 28 to 31 (TGST), 83 to 86 (DGAD), and 96 to 99 (KGGG). The Proton acceptor role is filled by Glu105. Lys123 is a substrate binding site.

This sequence belongs to the ribose 5-phosphate isomerase family. As to quaternary structure, homodimer.

It carries out the reaction aldehydo-D-ribose 5-phosphate = D-ribulose 5-phosphate. It functions in the pathway carbohydrate degradation; pentose phosphate pathway; D-ribose 5-phosphate from D-ribulose 5-phosphate (non-oxidative stage): step 1/1. In terms of biological role, catalyzes the reversible conversion of ribose-5-phosphate to ribulose 5-phosphate. This chain is Ribose-5-phosphate isomerase A, found in Rhizobium rhizogenes (strain K84 / ATCC BAA-868) (Agrobacterium radiobacter).